Here is a 237-residue protein sequence, read N- to C-terminus: Small ribosomal subunit protein eS4 (237 aa).

An S4 RNA-binding domain is found at 37–100 (IPLAVLLRDV…NEYYRIIPDP (64 aa)).

This sequence belongs to the eukaryotic ribosomal protein eS4 family.

The polypeptide is Small ribosomal subunit protein eS4 (Caldivirga maquilingensis (strain ATCC 700844 / DSM 13496 / JCM 10307 / IC-167)).